The sequence spans 195 residues: Interferon tau-9 (195 aa).

The first 23 residues, Met-1–Gly-23, serve as a signal peptide directing secretion. 2 disulfides stabilise this stretch: Cys-24–Cys-122 and Cys-52–Cys-162.

It belongs to the alpha/beta interferon family. IFN-alphaII subfamily. In terms of tissue distribution, constitutively and exclusively expressed in the mononuclear cells of the extraembryonic trophectoderm.

The protein resides in the secreted. Paracrine hormone primarily responsible for maternal recognition of pregnancy. Interacts with endometrial receptors, probably type I interferon receptors, and blocks estrogen receptor expression, preventing the estrogen-induced increase in oxytocin receptor expression in the endometrium. This results in the suppression of the pulsatile endometrial release of the luteolytic hormone prostaglandin F2-alpha, hindering the regression of the corpus luteum (luteolysis) and therefore a return to ovarian cyclicity. This, and a possible direct effect of IFN-tau on prostaglandin synthesis, leads in turn to continued ovarian progesterone secretion, which stimulates the secretion by the endometrium of the nutrients required for the growth of the conceptus. In summary, displays particularly high antiviral and antiproliferative potency concurrently with particular weak cytotoxicity, high antiluteolytic activity and immunomodulatory properties. In contrast with other IFNs, IFN-tau is not virally inducible. The chain is Interferon tau-9 (IFNT9) from Ovis aries (Sheep).